Consider the following 65-residue polypeptide: Large ribosomal subunit protein bL35 (65 aa).

The tract at residues 1 to 25 (MPKLKTKSSAAKRFKKTGKGGFKHR) is disordered.

The protein belongs to the bacterial ribosomal protein bL35 family.

This chain is Large ribosomal subunit protein bL35, found in Francisella tularensis subsp. holarctica (strain FTNF002-00 / FTA).